A 421-amino-acid polypeptide reads, in one-letter code: GTPase Obg (421 aa).

Residues 1-158 (MYFIDEAINE…FKIKTELKIL (158 aa)) enclose the Obg domain. Positions 159–324 (ADVGLIGYPS…LKYKMLEMIK (166 aa)) constitute an OBG-type G domain. GTP contacts are provided by residues 165-172 (GYPSVGKS), 190-194 (FTTLK), 211-214 (DLPG), 278-281 (NKMD), and 305-307 (SLL). Mg(2+) contacts are provided by Ser172 and Thr192. One can recognise an OCT domain in the interval 342-421 (TLEEEKPDFV…ICDRVFEFIT (80 aa)).

Belongs to the TRAFAC class OBG-HflX-like GTPase superfamily. OBG GTPase family. Monomer. It depends on Mg(2+) as a cofactor.

The protein resides in the cytoplasm. An essential GTPase which binds GTP, GDP and possibly (p)ppGpp with moderate affinity, with high nucleotide exchange rates and a fairly low GTP hydrolysis rate. Plays a role in control of the cell cycle, stress response, ribosome biogenesis and in those bacteria that undergo differentiation, in morphogenesis control. The sequence is that of GTPase Obg from Phytoplasma mali (strain AT).